A 930-amino-acid polypeptide reads, in one-letter code: Probable outer membrane protein pmp8 (930 aa).

An N-terminal signal peptide occupies residues M1 to G26. Residues S636 to F930 enclose the Autotransporter domain.

This sequence belongs to the PMP outer membrane protein family.

It localises to the secreted. The protein resides in the cell wall. The protein localises to the cell outer membrane. The protein is Probable outer membrane protein pmp8 (pmp8) of Chlamydia pneumoniae (Chlamydophila pneumoniae).